A 142-amino-acid polypeptide reads, in one-letter code: Maximins y/Hw (142 aa).

An N-terminal signal peptide occupies residues 1-18; the sequence is MIFKYIVAVSFLIASGYA. The propeptide occupies 19–43; it reads RSVKNDEQSLSQREVLEEESLREIR. Residue Phe-68 is modified to Phenylalanine amide. Residues 72–121 constitute a propeptide that is removed on maturation; it reads TAEDHEVMKRLEAVIRDLDSLDHSEEASERETRGFNQEEIANLFTKKEKR. Ile-141 bears the Isoleucine amide mark.

It belongs to the bombinin family. As to expression, expressed by the skin glands.

The protein localises to the secreted. Maximin-y shows antimicrobial activity against bacteria and against the fungus C.albicans. It has little hemolytic activity. Functionally, maximin-Hw shows antimicrobial activity against bacteria and against the fungus C.albicans. Shows strong hemolytic activity. This Bombina maxima (Giant fire-bellied toad) protein is Maximins y/Hw.